A 524-amino-acid polypeptide reads, in one-letter code: Translation initiation factor eIF2B subunit delta (524 aa).

Residues 1–155 form a disordered region; sequence MAAVAVAVRE…EHTPADDPTL (155 aa). The residue at position 2 (alanine 2) is an N-acetylalanine. Basic and acidic residues-rich tracts occupy residues 8–20 and 31–40; these read VREE…KTEL and LTQEEKLQLR. Phosphoserine is present on serine 12. Residues 41-51 are compositionally biased toward basic residues; the sequence is KEKKQQKKKRK. Residue threonine 86 is modified to Phosphothreonine. Positions 96–121 are enriched in basic and acidic residues; the sequence is SKAELRAERRAKQEAERALKQARKGE. Residues 130-140 show a composition bias toward polar residues; sequence CPSTAGETTSG. A may bind the chemical integrated stress response (ISR) inhibitor ISRIB region spans residues 171 to 180; sequence RKDYGSKVSL.

It belongs to the eIF-2B alpha/beta/delta subunits family. Component of the translation initiation factor 2B (eIF2B) complex which is a heterodecamer of two sets of five different subunits: alpha, beta, gamma, delta and epsilon. Subunits alpha, beta and delta comprise a regulatory subcomplex and subunits epsilon and gamma comprise a catalytic subcomplex. Within the complex, the hexameric regulatory complex resides at the center, with the two heterodimeric catalytic subcomplexes bound on opposite sides.

It is found in the cytoplasm. Its subcellular location is the cytosol. Its activity is regulated as follows. Activated by the chemical integrated stress response (ISR) inhibitor ISRIB which stimulates guanine nucleotide exchange factor activity for both phosphorylated and unphosphorylated eIF2. Acts as a component of the translation initiation factor 2B (eIF2B) complex, which catalyzes the exchange of GDP for GTP on eukaryotic initiation factor 2 (eIF2) gamma subunit. Its guanine nucleotide exchange factor activity is repressed when bound to eIF2 complex phosphorylated on the alpha subunit, thereby limiting the amount of methionyl-initiator methionine tRNA available to the ribosome and consequently global translation is repressed. This is Translation initiation factor eIF2B subunit delta (Eif2b4) from Mus musculus (Mouse).